Consider the following 670-residue polypeptide: Receptor for retinol uptake STRA6 (670 aa).

The Extracellular portion of the chain corresponds to 1 to 50 (MESQASENGSQTSSGVTDDYSSWYIEEPLGAEEVQPEGVIPLCQLTAPPA). Asn8 carries N-linked (GlcNAc...) asparagine glycosylation. Residues 51–71 (LLHACLASLSFLVLLLLALLV) form a helical membrane-spanning segment. Over 72–97 (RRRRLWPRCGHRGLGLPSPVDFLAGD) the chain is Cytoplasmic. A helical membrane pass occupies residues 98-118 (LSWTVPAAVFVVLFSNLCLLL). Residues 119-144 (PDENPLPFLNLTAASSPDGEMETSRG) lie on the Extracellular side of the membrane. Asn128 carries N-linked (GlcNAc...) asparagine glycosylation. Residues 145 to 165 (PWKLLALLYYPALYYPLAACA) form a helical membrane-spanning segment. Over 166 to 168 (SAG) the chain is Cytoplasmic. The chain crosses the membrane as a helical span at residues 169 to 189 (HQAAFLLGTVLSWAHFGVQVW). Over 190–205 (QKAECPQDPKIYKHYS) the chain is Extracellular. A helical membrane pass occupies residues 206-226 (LLASLPLLLGLGFLSLWYPVQ). The Cytoplasmic segment spans residues 227–296 (LVQSLRHRTG…PQPGFRLPLK (70 aa)). The interval 235–294 (TGAGSQGLQTSYSEKYLRTLLCPKKLDSCSHPASKRSLLSRAWAFSHHSIYTPQPGFRLP) is interaction with RBP1. The helical transmembrane segment at 297-317 (LVISATLTGTATYQVALLLLV) threads the bilayer. The Extracellular segment spans residues 318 to 368 (SVVPTVQKVRAGINTDVSYLLAGFGIVLSEDRQEVVELVKHHLWTVEACYI). Residues 369-389 (SALVLSCASTFLLLIRSLRTH) form a helical membrane-spanning segment. Residues 390–423 (RANLQALHRGAALDLDPPLQSIHPSRQAIVSWMS) lie on the Cytoplasmic side of the membrane. A helical membrane pass occupies residues 424–444 (FCAYQTAFSCLGLLVQQVIFF). Topologically, residues 445 to 474 (LGTTSLAFLVFVPLLHGRNLLLLRSLESTW) are extracellular. The helical transmembrane segment at 475 to 495 (PFWLTVALAVILQNIAANWIF) threads the bilayer. The Cytoplasmic portion of the chain corresponds to 496–510 (LRTHHGYPELTNRRM). An intramembrane region (helical) is located at residues 511-548 (LCVATFLLFPINMLVGAIMAVWRVLISSLYNTVHLGQM). Residues 549–670 (DLSLLPQRAA…TSAKANGTQP (122 aa)) are Cytoplasmic-facing. Position 644 is a phosphotyrosine (Tyr644).

Homodimer. Interacts with JAK2 and STAT5. Interacts (via extracellular domains) with RBP4. Interacts (via cytoplasmic domains) with RBP1. Phosphorylated on tyrosine residues in response to RBP4 binding. Phosphorylation requires the presence of LRAT, suggesting it may be triggered by the uptake of retinol that is then metabolized within the cell to retinoids that function as signaling molecules. As to expression, widely expressed in the embryo. Detected in adult in the retinal pigment epithelium in the eye. In the adult, is highly expressed in cells that compose blood-organ barriers in the brain (choroid plexus and the brain microvascular), in testis (the basal layer of the seminiferous epithelium), in the yolk sac, and in the chorioallantoic placenta. Detected in white adipose tissue and skeletal muscle, but not in liver (at protein level). Widely expressed in adult, with high expression levels in the eye. Detected in brain, cerebellum, testis, pituitary, pancreas, kidney, spleen, and female genital tract; and at very low levels in heart and lung. Not detected in liver.

The protein localises to the cell membrane. Functionally, functions as a retinol transporter. Accepts all-trans retinol from the extracellular retinol-binding protein RBP4, facilitates retinol transport across the cell membrane, and then transfers retinol to the cytoplasmic retinol-binding protein RBP1. Retinol uptake is enhanced by LRAT, an enzyme that converts retinol to all-trans retinyl esters, the storage forms of vitamin A. Contributes to the activation of a signaling cascade that depends on retinol transport and LRAT-dependent generation of retinol metabolites that then trigger activation of JAK2 and its target STAT5, and ultimately increase the expression of SOCS3 and inhibit cellular responses to insulin. Important for the homeostasis of vitamin A and its derivatives, such as retinoic acid and 11-cis-retinal. STRA6-mediated transport is particularly important in the eye, and under conditions of dietary vitamin A deficiency. Does not transport retinoic acid. The chain is Receptor for retinol uptake STRA6 (Stra6) from Mus musculus (Mouse).